A 180-amino-acid chain; its full sequence is Nucleoside-triphosphatase THEP1 (180 aa).

ATP is bound by residues 8–15 (GPVGSIKA) and 100–107 (VIIIDELG).

Belongs to the THEP1 NTPase family.

It catalyses the reaction a ribonucleoside 5'-triphosphate + H2O = a ribonucleoside 5'-diphosphate + phosphate + H(+). Its function is as follows. Has nucleotide phosphatase activity towards ATP, GTP, CTP, TTP and UTP. May hydrolyze nucleoside diphosphates with lower efficiency. This chain is Nucleoside-triphosphatase THEP1, found in Picrophilus torridus (strain ATCC 700027 / DSM 9790 / JCM 10055 / NBRC 100828 / KAW 2/3).